The following is a 196-amino-acid chain: MHRLLLLMMLTALGVAGCGQKKPPDPPNRVPEKKVVETSAFGHHVQLVNREGKAVGFIEIKESDDEGLDIHISANSLRPGASLGFHIYEKGSCVRPDFESAGGPFNPLNKEHGFNNPMGHHAGDLPNLEVGADGKVDVIMNAPDTSLKKGSKLNILDEDGSAFIIHEQADDYLTNPSGNSGARIVCGALLGNNEKQ.

The first 17 residues, 1 to 17, serve as a signal peptide directing secretion; that stretch reads MHRLLLLMMLTALGVAG. Cys18 carries the N-palmitoyl cysteine lipid modification. Cys18 is lipidated: S-diacylglycerol cysteine. Residue His71 coordinates Zn(2+). His86 is a Cu cation binding site. A disulfide bond links Cys93 and Cys186. Residue Asp137 coordinates Zn(2+). His166 is a binding site for Cu cation.

Belongs to the Cu-Zn superoxide dismutase family. Monomer, and homodimer. Largely unstructured monomer in solution. Well-ordered homodimer in the crystal. Zn(2+) is required as a cofactor.

The protein resides in the cell membrane. In Bacillus subtilis (strain 168), this protein is Superoxide dismutase-like protein YojM (yojM).